The primary structure comprises 1377 residues: Temperature-sensitive hemagglutinin tsh autotransporter (1377 aa).

The N-terminal stretch at 1–52 (MNRIYSLRYSAVARGFIAVSEFARKCVHKSVRRLCFPVLLLIPVLFSAGSLA) is a signal peptide. Residues 53–302 (GTVNNELGYQ…AVIPLDFIGQ (250 aa)) enclose the Peptidase S6 domain. Catalysis depends on charge relay system residues histidine 125, aspartate 153, and serine 259. Residues 1111-1377 (DINGEAGTWV…AINANIRYSF (267 aa)) enclose the Autotransporter domain.

The C-terminus is blocked. Post-translationally, cleaved to release the mature protein from the outer membrane.

The protein resides in the periplasm. It localises to the secreted. Its subcellular location is the cell surface. It is found in the cell outer membrane. Contributes to the development of lesions and deposition of fibrin in the avian air sacs. It can act both as an adhesin and as a serine protease. Agglutinates erythrocytes while in contact with the extracellular surface of the bacterial cells. Can adhere to purified hemoglobin and bind with great efficiency to extracellular matrix proteins. Cleaves casein and exhibits mucinolytic activity. The chain is Temperature-sensitive hemagglutinin tsh autotransporter (tsh) from Escherichia coli.